The chain runs to 269 residues: Formamidopyrimidine-DNA glycosylase (269 aa).

Pro2 acts as the Schiff-base intermediate with DNA in catalysis. The Proton donor role is filled by Glu3. The active-site Proton donor; for beta-elimination activity is the Lys58. His91, Arg110, and Lys150 together coordinate DNA. An FPG-type zinc finger spans residues 235–269 (SVYGCENKTCHFCKSKIIKIVQNQRSTFYCRKCQT). Residue Arg259 is the Proton donor; for delta-elimination activity of the active site.

Belongs to the FPG family. In terms of assembly, monomer. Requires Zn(2+) as cofactor.

It catalyses the reaction Hydrolysis of DNA containing ring-opened 7-methylguanine residues, releasing 2,6-diamino-4-hydroxy-5-(N-methyl)formamidopyrimidine.. The enzyme catalyses 2'-deoxyribonucleotide-(2'-deoxyribose 5'-phosphate)-2'-deoxyribonucleotide-DNA = a 3'-end 2'-deoxyribonucleotide-(2,3-dehydro-2,3-deoxyribose 5'-phosphate)-DNA + a 5'-end 5'-phospho-2'-deoxyribonucleoside-DNA + H(+). Involved in base excision repair of DNA damaged by oxidation or by mutagenic agents. Acts as a DNA glycosylase that recognizes and removes damaged bases. Has a preference for oxidized purines, such as 7,8-dihydro-8-oxoguanine (8-oxoG). Has AP (apurinic/apyrimidinic) lyase activity and introduces nicks in the DNA strand. Cleaves the DNA backbone by beta-delta elimination to generate a single-strand break at the site of the removed base with both 3'- and 5'-phosphates. The chain is Formamidopyrimidine-DNA glycosylase from Ruthia magnifica subsp. Calyptogena magnifica.